The sequence spans 442 residues: tRNA modification GTPase MnmE (442 aa).

(6S)-5-formyl-5,6,7,8-tetrahydrofolate is bound by residues Arg22, Glu79, and Lys119. The TrmE-type G domain maps to 216–366 (GIKTCLVGAP…LLEKIKSIFA (151 aa)). A K(+)-binding site is contributed by Asn226. Residues 226–231 (NSGKSS), 245–251 (SEIPGTT), and 270–273 (DTAG) contribute to the GTP site. Ser230 contributes to the Mg(2+) binding site. The K(+) site is built by Ser245, Ile247, and Thr250. Thr251 provides a ligand contact to Mg(2+). Lys442 contributes to the (6S)-5-formyl-5,6,7,8-tetrahydrofolate binding site.

The protein belongs to the TRAFAC class TrmE-Era-EngA-EngB-Septin-like GTPase superfamily. TrmE GTPase family. In terms of assembly, homodimer. Heterotetramer of two MnmE and two MnmG subunits. Requires K(+) as cofactor.

It localises to the cytoplasm. Its function is as follows. Exhibits a very high intrinsic GTPase hydrolysis rate. Involved in the addition of a carboxymethylaminomethyl (cmnm) group at the wobble position (U34) of certain tRNAs, forming tRNA-cmnm(5)s(2)U34. The protein is tRNA modification GTPase MnmE of Mesomycoplasma hyopneumoniae (strain 7448) (Mycoplasma hyopneumoniae).